Consider the following 491-residue polypeptide: UDP-N-acetylmuramate--L-alanine ligase (491 aa).

126 to 132 contributes to the ATP binding site; the sequence is GTHGKTT.

The protein belongs to the MurCDEF family.

The protein resides in the cytoplasm. It carries out the reaction UDP-N-acetyl-alpha-D-muramate + L-alanine + ATP = UDP-N-acetyl-alpha-D-muramoyl-L-alanine + ADP + phosphate + H(+). The protein operates within cell wall biogenesis; peptidoglycan biosynthesis. Its function is as follows. Cell wall formation. The protein is UDP-N-acetylmuramate--L-alanine ligase of Klebsiella pneumoniae (strain 342).